The following is a 734-amino-acid chain: Photosystem I P700 chlorophyll a apoprotein A2 (734 aa).

The next 8 membrane-spanning stretches (helical) occupy residues 46-69 (IFAS…FHVA), 135-158 (LYIG…LHLQ), 175-199 (LNHH…HVAI), 273-291 (MAHH…GHMY), 330-353 (LHFQ…QHMY), 369-395 (AALY…IFFI), 417-439 (AIIS…LYVH), and 517-535 (FLVH…LILV). Residues Cys559 and Cys568 each coordinate [4Fe-4S] cluster. 2 helical membrane-spanning segments follow: residues 575 to 596 (AFYL…YWHW) and 643 to 665 (LSVW…MFLI). The chlorophyll a site is built by His654, Met662, and Tyr670. Phylloquinone is bound at residue Trp671. The chain crosses the membrane as a helical span at residues 707-727 (LVGLAHFSVGYIFTYAAFLIA).

It belongs to the PsaA/PsaB family. As to quaternary structure, the PsaA/B heterodimer binds the P700 chlorophyll special pair and subsequent electron acceptors. PSI consists of a core antenna complex that captures photons, and an electron transfer chain that converts photonic excitation into a charge separation. The eukaryotic PSI reaction center is composed of at least 11 subunits. The cofactor is P700 is a chlorophyll a/chlorophyll a' dimer, A0 is one or more chlorophyll a, A1 is one or both phylloquinones and FX is a shared 4Fe-4S iron-sulfur center..

The protein resides in the plastid. It is found in the chloroplast thylakoid membrane. It catalyses the reaction reduced [plastocyanin] + hnu + oxidized [2Fe-2S]-[ferredoxin] = oxidized [plastocyanin] + reduced [2Fe-2S]-[ferredoxin]. Functionally, psaA and PsaB bind P700, the primary electron donor of photosystem I (PSI), as well as the electron acceptors A0, A1 and FX. PSI is a plastocyanin-ferredoxin oxidoreductase, converting photonic excitation into a charge separation, which transfers an electron from the donor P700 chlorophyll pair to the spectroscopically characterized acceptors A0, A1, FX, FA and FB in turn. Oxidized P700 is reduced on the lumenal side of the thylakoid membrane by plastocyanin. This Populus alba (White poplar) protein is Photosystem I P700 chlorophyll a apoprotein A2.